The primary structure comprises 65 residues: DNA gyrase inhibitor YacG (65 aa).

Cys9, Cys12, Cys28, and Cys32 together coordinate Zn(2+). The interval 45 to 65 is disordered; sequence KRIPSSGDLSESDDWSEEPKQ. A compositionally biased stretch (acidic residues) spans 54–65; the sequence is SESDDWSEEPKQ.

It belongs to the DNA gyrase inhibitor YacG family. Interacts with GyrB. Zn(2+) serves as cofactor.

Inhibits all the catalytic activities of DNA gyrase by preventing its interaction with DNA. Acts by binding directly to the C-terminal domain of GyrB, which probably disrupts DNA binding by the gyrase. This Shigella boydii serotype 18 (strain CDC 3083-94 / BS512) protein is DNA gyrase inhibitor YacG.